Consider the following 150-residue polypeptide: Large ribosomal subunit protein bL9 (150 aa).

Belongs to the bacterial ribosomal protein bL9 family.

Binds to the 23S rRNA. The chain is Large ribosomal subunit protein bL9 from Neisseria meningitidis serogroup A / serotype 4A (strain DSM 15465 / Z2491).